Reading from the N-terminus, the 349-residue chain is tRNA-specific 2-thiouridylase MnmA (349 aa).

ATP-binding positions include Gly-7–Ser-14 and Leu-33. Cys-94 (nucleophile) is an active-site residue. Cys-94 and Cys-193 are joined by a disulfide. Gly-119 is an ATP binding site. Positions Lys-143 to Gln-145 are interaction with tRNA. Cys-193 serves as the catalytic Cysteine persulfide intermediate. The interval Arg-298–Tyr-299 is interaction with tRNA.

This sequence belongs to the MnmA/TRMU family.

It is found in the cytoplasm. The enzyme catalyses S-sulfanyl-L-cysteinyl-[protein] + uridine(34) in tRNA + AH2 + ATP = 2-thiouridine(34) in tRNA + L-cysteinyl-[protein] + A + AMP + diphosphate + H(+). Its function is as follows. Catalyzes the 2-thiolation of uridine at the wobble position (U34) of tRNA, leading to the formation of s(2)U34. This chain is tRNA-specific 2-thiouridylase MnmA, found in Rippkaea orientalis (strain PCC 8801 / RF-1) (Cyanothece sp. (strain PCC 8801)).